Reading from the N-terminus, the 1785-residue chain is Mellein synthase (1785 aa).

The interval 1–36 is disordered; that stretch reads MATPDDPATPALSLSASNSSSPTAASSVPPPTGTSE. A compositionally biased stretch (low complexity) spans 8–27; the sequence is ATPALSLSASNSSSPTAASS. Residues 39–464 enclose the Ketosynthase family 3 (KS3) domain; sequence YDDVAIIGMS…GTVSHAIIEQ (426 aa). Residues C211, H346, and H386 each act as for beta-ketoacyl synthase activity in the active site. Residues 575–888 form a malonyl-CoA:ACP transacylase (MAT) domain region; it reads VWVFSGHGSH…AVAQLWTKGV (314 aa). S661 (for malonyltransferase activity) is an active-site residue. Positions 933-1047 are N-terminal hotdog fold; the sequence is NNMLGQRMVV…ASWENEPSAN (115 aa). Residues 933–1206 form the PKS/mFAS DH domain; the sequence is NNMLGQRMVV…FTEVEATPTK (274 aa). Positions 935–1203 are dehydratase (DH) domain; it reads MLGQRMVVAG…SIRFTEVEAT (269 aa). H965 functions as the Proton acceptor; for dehydratase activity in the catalytic mechanism. The C-terminal hotdog fold stretch occupies residues 1062–1206; it reads GTRVSETFSV…FTEVEATPTK (145 aa). D1123 acts as the Proton donor; for dehydratase activity in catalysis. The interval 1418–1608 is ketoreductase (KR) domain; sequence GTYVLTGGLG…AIAFQWTAWR (191 aa). Residues 1681–1698 show a composition bias toward polar residues; that stretch reads QDQSAPASGNASDSSGRP. Residues 1681–1701 form a disordered region; sequence QDQSAPASGNASDSSGRPTAS. In terms of domain architecture, Carrier spans 1706–1781; sequence PWLDVKIREC…AMVGWFQKQF (76 aa). At S1741 the chain carries O-(pantetheine 4'-phosphoryl)serine.

It participates in secondary metabolite biosynthesis. Polyketide synthase that produces (R)-mellein, a secondary metabolite that inhibits the germination of wheat (Triticum aestivum) and barrel medic (Medicago truncatula) seeds. Condensates 1 acetate starter unit and 4 extender malonate units. The nascent pentaketide intermediate then undergoes an aldol cyclization and is aromatized via dehydration. The (R)-O-methylmellein isolated from P.nodorum is most likely to be derived from (R)-mellein via an additional methylation at the hydroxyl group. Interestingly, no O-methyltransferase gene is encoded in the vicinity of MLNS on the chromosome. Thus, the O-methylation is likely to be catalyzed by an endogenous O-methyltransferase encoded elsewhere in the genome of P.nodorum. This Phaeosphaeria nodorum (strain SN15 / ATCC MYA-4574 / FGSC 10173) (Glume blotch fungus) protein is Mellein synthase.